A 596-amino-acid polypeptide reads, in one-letter code: Linalool synthase TPS3, chloroplastic (596 aa).

Residues 1–39 (MISSLNPLFTTHRSGVIAQQFFASSAAASINSVSSLKIA) constitute a chloroplast transit peptide. Residues Arg308, Asp345, Asp349, Arg486, and Asn489 each contribute to the (2E)-geranyl diphosphate site. Mg(2+) is bound by residues Asp345 and Asp349. A DDXXD motif motif is present at residues 345–349 (DDIYD). Asn489, Thr493, and Ser497 together coordinate Mg(2+).

It belongs to the terpene synthase family. Tpsb subfamily. In terms of assembly, monomer. Requires Mg(2+) as cofactor. Mn(2+) is required as a cofactor. As to expression, expressed in flowers and fruits.

The protein localises to the plastid. It localises to the chloroplast. It catalyses the reaction (2E)-geranyl diphosphate = beta-myrcene + diphosphate. The catalysed reaction is (2E)-geranyl diphosphate + H2O = linalool + diphosphate. It carries out the reaction (2E)-geranyl diphosphate = (Z)-beta-ocimene + diphosphate. The enzyme catalyses (2E)-geranyl diphosphate = (E)-beta-ocimene + diphosphate. Its pathway is secondary metabolite biosynthesis; terpenoid biosynthesis. Monoterpene synthase (mono-TPS) involved in the biosynthesis of monoterpenes natural products, constituent of coffee beverage aroma. Catalyzes the conversion of (2E)-geranyl diphosphate (GPP) into linalool and beta-myrcene, and, as minor products, cis-ocimene and trans-ocimene. Not able to use geranylgeranyl pyrophosphate (GGPP) and farnesyl pyrophosphate (FPP) as substrates. This chain is Linalool synthase TPS3, chloroplastic, found in Coffea arabica (Arabian coffee).